The primary structure comprises 167 residues: UPF0178 protein bll3966 (167 aa).

The protein belongs to the UPF0178 family.

This is UPF0178 protein bll3966 from Bradyrhizobium diazoefficiens (strain JCM 10833 / BCRC 13528 / IAM 13628 / NBRC 14792 / USDA 110).